The sequence spans 206 residues: Ribonuclease HII (206 aa).

The RNase H type-2 domain occupies 1 to 206 (MKVLGIDEAG…SWATVQKKKQ (206 aa)). 3 residues coordinate a divalent metal cation: aspartate 7, glutamate 8, and aspartate 105.

Belongs to the RNase HII family. The cofactor is Mn(2+). Mg(2+) serves as cofactor.

It localises to the cytoplasm. The catalysed reaction is Endonucleolytic cleavage to 5'-phosphomonoester.. In terms of biological role, endonuclease that specifically degrades the RNA of RNA-DNA hybrids. The chain is Ribonuclease HII (rnhB) from Methanothermobacter thermautotrophicus (strain ATCC 29096 / DSM 1053 / JCM 10044 / NBRC 100330 / Delta H) (Methanobacterium thermoautotrophicum).